The following is a 495-amino-acid chain: uncharacterized protein (495 aa).

Residues 337 to 360 (STSNRESDCSGNEDDSSNAKYAKK) are disordered.

This is an uncharacterized protein from Caenorhabditis elegans.